Reading from the N-terminus, the 369-residue chain is MYIDRILLKNFRNYKDETIKFSKNLNIIYGQNAQGKTNIIEAVFLCASGRSHRTSKDTELVNIDGTGFSVLLDLESSEGRKKIEIDYECGKKKVVKINEIPLKKIGNLMGNLLAVIFSPEDILIIKEGPSERRRFIDITLCQLKPSYFYDLQQYNKVLSQRNMLLKEIQYKRNLLDTLEVWDYKMAELSSRIMTTRSEFIKRLCEISKKIHLKLTDGSEIMEIKYSPSVDLHDLSNPSEIKNEFIRQLNSIRDIELKRCVTLIGPHRDDYEMELNGLNLKMFGSQGQQRTSLLSLKLAEIEIIKSETDEDPVLLLDDVMSELDFKRREFLLENIRNVQTFITCTDKELFENRNFGDNLYIRVEAGRTYY.

30 to 37 (GQNAQGKT) is an ATP binding site.

It belongs to the RecF family.

The protein localises to the cytoplasm. Functionally, the RecF protein is involved in DNA metabolism; it is required for DNA replication and normal SOS inducibility. RecF binds preferentially to single-stranded, linear DNA. It also seems to bind ATP. This is DNA replication and repair protein RecF from Acetivibrio thermocellus (strain ATCC 27405 / DSM 1237 / JCM 9322 / NBRC 103400 / NCIMB 10682 / NRRL B-4536 / VPI 7372) (Clostridium thermocellum).